Consider the following 207-residue polypeptide: Outer-membrane lipoprotein LolB (207 aa).

Residues 1-21 (MTLPDFRLIRLLPLASLVLTA) form the signal peptide. Cysteine 22 carries N-palmitoyl cysteine lipidation. Cysteine 22 is lipidated: S-diacylglycerol cysteine.

It belongs to the LolB family. As to quaternary structure, monomer.

It localises to the cell outer membrane. In terms of biological role, plays a critical role in the incorporation of lipoproteins in the outer membrane after they are released by the LolA protein. This is Outer-membrane lipoprotein LolB from Salmonella arizonae (strain ATCC BAA-731 / CDC346-86 / RSK2980).